Consider the following 1036-residue polypeptide: DNA-directed RNA polymerase subunit beta (1036 aa).

It belongs to the RNA polymerase beta chain family. As to quaternary structure, in plastids the minimal PEP RNA polymerase catalytic core is composed of four subunits: alpha, beta, beta', and beta''. When a (nuclear-encoded) sigma factor is associated with the core the holoenzyme is formed, which can initiate transcription.

Its subcellular location is the plastid. The protein resides in the chloroplast. The enzyme catalyses RNA(n) + a ribonucleoside 5'-triphosphate = RNA(n+1) + diphosphate. DNA-dependent RNA polymerase catalyzes the transcription of DNA into RNA using the four ribonucleoside triphosphates as substrates. This is DNA-directed RNA polymerase subunit beta from Cyanidioschyzon merolae (strain NIES-3377 / 10D) (Unicellular red alga).